A 701-amino-acid chain; its full sequence is DC-STAMP domain-containing protein 2 (701 aa).

A run of 4 helical transmembrane segments spans residues Thr-15–Gly-35, Pro-40–Phe-60, Leu-82–Gln-102, and Phe-215–Leu-235. Residues Asn-272 and Asn-284 are each glycosylated (N-linked (GlcNAc...) asparagine). A run of 2 helical transmembrane segments spans residues Ala-310–Leu-330 and Leu-404–Ala-424. Asn-468 carries an N-linked (GlcNAc...) asparagine glycan. A helical transmembrane segment spans residues Tyr-488–Val-508. Residues Leu-673–Gln-701 form a disordered region. Residues Ser-685 to Gln-701 are compositionally biased toward basic and acidic residues.

In terms of assembly, interacts with DCST1. Expressed in testis.

It localises to the cytoplasmic vesicle. It is found in the secretory vesicle. The protein resides in the acrosome membrane. Functionally, essential sperm cell-surface protein required for sperm-egg fusion and fertilization. In Mus musculus (Mouse), this protein is DC-STAMP domain-containing protein 2.